A 141-amino-acid polypeptide reads, in one-letter code: Nucleoside diphosphate kinase (141 aa).

The ATP site is built by K9, F57, R85, T91, R102, and N112. Residue H115 is the Pros-phosphohistidine intermediate of the active site.

It belongs to the NDK family. Homotetramer. Mg(2+) is required as a cofactor.

The protein resides in the cytoplasm. It catalyses the reaction a 2'-deoxyribonucleoside 5'-diphosphate + ATP = a 2'-deoxyribonucleoside 5'-triphosphate + ADP. The enzyme catalyses a ribonucleoside 5'-diphosphate + ATP = a ribonucleoside 5'-triphosphate + ADP. Its function is as follows. Major role in the synthesis of nucleoside triphosphates other than ATP. The ATP gamma phosphate is transferred to the NDP beta phosphate via a ping-pong mechanism, using a phosphorylated active-site intermediate. This Chlamydia abortus (strain DSM 27085 / S26/3) (Chlamydophila abortus) protein is Nucleoside diphosphate kinase.